The following is a 127-amino-acid chain: Fluoride-specific ion channel FluC 1 (127 aa).

4 helical membrane-spanning segments follow: residues 3–23 (LLIV…VGQW), 35–55 (IAML…FGLY), 74–94 (IGFF…VLLI), and 102–122 (LFSY…LGFY). Na(+) contacts are provided by Gly-78 and Thr-81.

Belongs to the fluoride channel Fluc/FEX (TC 1.A.43) family.

Its subcellular location is the cell membrane. It catalyses the reaction fluoride(in) = fluoride(out). Its activity is regulated as follows. Na(+) is not transported, but it plays an essential structural role and its presence is essential for fluoride channel function. Fluoride-specific ion channel. Important for reducing fluoride concentration in the cell, thus reducing its toxicity. The polypeptide is Fluoride-specific ion channel FluC 1 (Halalkalibacterium halodurans (strain ATCC BAA-125 / DSM 18197 / FERM 7344 / JCM 9153 / C-125) (Bacillus halodurans)).